The chain runs to 241 residues: Large ribosomal subunit protein uL3 (241 aa).

Residues 140–168 (SHRSIGSTGGRQDPGKTFKNKKMPGHMGD) form a disordered region. Gln151 carries the N5-methylglutamine modification.

This sequence belongs to the universal ribosomal protein uL3 family. Part of the 50S ribosomal subunit. Forms a cluster with proteins L14 and L19. Post-translationally, methylated by PrmB.

Its function is as follows. One of the primary rRNA binding proteins, it binds directly near the 3'-end of the 23S rRNA, where it nucleates assembly of the 50S subunit. The sequence is that of Large ribosomal subunit protein uL3 from Azorhizobium caulinodans (strain ATCC 43989 / DSM 5975 / JCM 20966 / LMG 6465 / NBRC 14845 / NCIMB 13405 / ORS 571).